Here is a 155-residue protein sequence, read N- to C-terminus: MSRQSTVEKKIDKFDPIYHNRLVNMIVNRILKHGKKSLAYRIFYQSLKKIQQKTEKNPLIVLRQAIHKLTPKLIVKSRRVSGSTYQVPIEIKNKEGKILAIRWLLESSRKRSGRNMHFKLSYEIMDAAREKGNAIRKKEEIHKMAESNKAFAHYH.

Belongs to the universal ribosomal protein uS7 family. In terms of assembly, part of the 30S ribosomal subunit.

It is found in the plastid. Its subcellular location is the chloroplast. Functionally, one of the primary rRNA binding proteins, it binds directly to 16S rRNA where it nucleates assembly of the head domain of the 30S subunit. This is Small ribosomal subunit protein uS7c (rps7) from Metasequoia glyptostroboides (Dawn redwood).